The following is a 167-amino-acid chain: Probable membrane-bound hydrogenase subunit mbhJ (167 aa).

Positions 35, 38, 102, and 132 each coordinate [4Fe-4S] cluster.

Belongs to the complex I 20 kDa subunit family. As to quaternary structure, the membrane-bound hydrogenase complex is composed of MbhK and MbhL, but may also contain MbhJ. [4Fe-4S] cluster serves as cofactor.

The protein localises to the cell membrane. It carries out the reaction H2 + 2 oxidized [2Fe-2S]-[ferredoxin] = 2 reduced [2Fe-2S]-[ferredoxin] + 2 H(+). With respect to regulation, inhibited by 0.1 mM Cu(2+). Its function is as follows. Probable subunit of a hydrogen-evolving hydrogenase that utilizes protons both as a substrate for hydrogen production and proton translocation. Acts by coupling the redox reaction via ferredoxin and iron-sulfur (Fe-S) clusters to proton translocation across the membrane, thereby conserving the redox energy in a proton gradient. The sequence is that of Probable membrane-bound hydrogenase subunit mbhJ from Pyrococcus furiosus (strain ATCC 43587 / DSM 3638 / JCM 8422 / Vc1).